The primary structure comprises 325 residues: Interleukin-10 receptor subunit beta (325 aa).

The first 19 residues, 1–19 (MAWSLGSWLGGCLLVSALG), serve as a signal peptide directing secretion. At 20–220 (MVPPPENVRM…QTTHDETVPS (201 aa)) the chain is on the extracellular side. Fibronectin type-III domains lie at 23–111 (PPEN…VDDT) and 114–216 (GPPG…THDE). 4 N-linked (GlcNAc...) asparagine glycosylation sites follow: Asn49, Asn68, Asn102, and Asn161. The cysteines at positions 66 and 74 are disulfide-linked. A disulfide bridge links Cys188 with Cys209. A helical transmembrane segment spans residues 221–242 (WMVAVILMASVFMVCLALLGCF). The Cytoplasmic segment spans residues 243–325 (ALLWCVYKKT…GTPPGQGPQS (83 aa)). The segment at 301-325 (DSESGKQNPGDSCSLGTPPGQGPQS) is disordered. Polar residues predominate over residues 305-315 (GKQNPGDSCSL).

Belongs to the type II cytokine receptor family. As to quaternary structure, heterodimer with IFNLR1.

The protein resides in the membrane. In terms of biological role, shared cell surface receptor required for the activation of five class 2 cytokines: IL10, IL22, IL26, IL28, and IFNL1. The IFNLR1/IL10RB dimer is a receptor for the cytokine ligands IFNL2 and IFNL3 and mediates their antiviral activity. The ligand/receptor complex stimulate the activation of the JAK/STAT signaling pathway leading to the expression of IFN-stimulated genes (ISG), which contribute to the antiviral state. This chain is Interleukin-10 receptor subunit beta (IL10RB), found in Homo sapiens (Human).